Consider the following 372-residue polypeptide: MPLPDFHVSEPFTLGIELEMQVVNPPGYDLSQDSSMLIDAVKNKITAGEVKHDITESMLELATDVCRDINQAAGQFSAMQKVVLQAAADHHLEICGGGTHPFQKWQRQEVCDNERYQRTLENFGYLIQQATVFGQHVHVGCASGDDAIYLLHGLSRFVPHFIALSAASPYMQGTDTRFASSRPNIFSAFPDNGPMPWVSNWQQFEALFRCLSYTTMIDSIKDLHWDIRPSPHFGTVEVRVMDTPLTLSHAVNMAGLIQATAHWLLTERPFKHQEKDYLLYKFNRFQACRYGLEGVITDPHTGDRRPLTEDTLRLLEKIAPSAHKIGASSAIEALHRQVVSGLNEAQLMRDFVADGGSLIGLVKKHCEIWADD.

It belongs to the glutamate--cysteine ligase type 2 family. YbdK subfamily. Homodimer.

The enzyme catalyses L-cysteine + L-glutamate + ATP = gamma-L-glutamyl-L-cysteine + ADP + phosphate + H(+). Its function is as follows. ATP-dependent carboxylate-amine ligase which exhibits weak glutamate--cysteine ligase activity. In Shigella sonnei (strain Ss046), this protein is Putative glutamate--cysteine ligase 2 (ybdK).